A 403-amino-acid chain; its full sequence is Sulfate adenylyltransferase (403 aa).

It belongs to the sulfate adenylyltransferase family.

It catalyses the reaction sulfate + ATP + H(+) = adenosine 5'-phosphosulfate + diphosphate. It functions in the pathway sulfur metabolism; hydrogen sulfide biosynthesis; sulfite from sulfate: step 1/3. This chain is Sulfate adenylyltransferase, found in Pelodictyon phaeoclathratiforme (strain DSM 5477 / BU-1).